A 509-amino-acid polypeptide reads, in one-letter code: Leucine-rich repeat-containing protein 14 (509 aa).

The LRR 1; degenerate repeat unit spans residues 111–146; it reads RQRLRLLDMTGMQEEGLEQNPDTMSLWSRTVTLAKA. An LRR 2; degenerate repeat occupies 210-234; it reads RLQCRDFRAEELSLRSTAGLLELLN. An LRR 3; degenerate repeat occupies 235–262; that stretch reads PGSVRQIDLRFNNLGLSGLNVLLPHMAK. One copy of the LRR 4; degenerate repeat lies at 263 to 298; it reads FSHLQSLKLPYSNVDVRRLSPVMEEGLQSFASQLGQ. LRR repeat units follow at residues 299 to 323, 324 to 355, 356 to 374, 380 to 407, and 408 to 432; these read LGALKELNLGSSRLSGRLRQLLGGL, QRPLESLELAFCSLLPMDLSYLSQSSHMSSLR, KLDLSGNNLSEFLLTPFLH, SGHLLYLDVMECKLADAHLSALMPILCR, and CSWLRYLGLFCNPISSDGLRMVLQN.

Belongs to the PRAME family. LRRC14 subfamily.

It localises to the cytoplasm. This chain is Leucine-rich repeat-containing protein 14, found in Xenopus laevis (African clawed frog).